We begin with the raw amino-acid sequence, 696 residues long: MARLVAVCRDGEEEFPFERRQIPLYIDDTLTMVMEFPDNVLNLDGHQNNGAQLKQFIQRHSMLKQQDLSIAMVVTSREVLSALSQLVPCVGCRRSVERLFSQLVESGNPALEPLTVGPKGVLSLTRSCMTDAKKLYTLFYVHGSKLNDMIDAIPKSKKNKRCQLHSLDTHKPKPLGGCWMDVWELMSQECRDEVVLIDSSCLLETLETYLRKHRFCTDCKNKVLRAYNILIGELDCSKEKGYCAALYEGLRCCPHERHIHVCCETDFIAHLLGRAEPEFAGGRRERHAKTIDIAQEEVLTCLGIHLYERLHRIWQKLRAEEQTWQMLFYLGVDALRKSFEMTVEKVQGISRLEQLCEEFSEEERVRELKQEKKRQKRKNRRKNKCVCDTPASLHTADEKAVSREKETDFIENSCNACGSAEDGETCVEVMVTSENTSCTCPSSGNLLGSPKIKKGMSPHCNGSDCGYSSSMEGSETGSREGSDVACTEGICNHDEHGEDSCVHHCEDKEDDGDSCVECWANSEENNIKGKNKKKKKKSKMLKCDEHIQKLGSCITDPGNRETSGNTMHTVFHRDKTKDAHPESCCSTEKGGQPLPWFEHRKSVPQFTEPTEMSFGPDSGKGAKSLVELLDESECTSDEEIFISQDEIQSFMANNQSFYSNREQYRQHLKEKFNKYCRLNDHKRPVCSGWLTTAGAN.

Phosphoserine occurs at positions 360 and 602.

As to quaternary structure, interacts with isoform 1 of GGN. Testis-specific.

The protein localises to the cytoplasmic vesicle. May be involved in spermatogenesis. The protein is Gametogenetin-binding protein 2 (Ggnbp2) of Mus musculus (Mouse).